The sequence spans 123 residues: MQIAWVALGGAIGAVARYVLSNAVYAWLGRAFPWGTLSVNLLGSFIMGLLFYLFTQRLMVPEALKPLVLVGGLGAFTTFSTFSLETLNLMQSGSWSLALLNMLSSVLLCVLAAYLGLVVGRLI.

Helical transmembrane passes span 3–23 (IAWV…LSNA), 34–54 (WGTL…FYLF), 67–87 (LVLV…LETL), and 99–119 (LLNM…GLVV). 2 residues coordinate Na(+): G74 and T77.

Belongs to the fluoride channel Fluc/FEX (TC 1.A.43) family.

It is found in the cell inner membrane. It carries out the reaction fluoride(in) = fluoride(out). With respect to regulation, na(+) is not transported, but it plays an essential structural role and its presence is essential for fluoride channel function. In terms of biological role, fluoride-specific ion channel. Important for reducing fluoride concentration in the cell, thus reducing its toxicity. The polypeptide is Fluoride-specific ion channel FluC (Magnetococcus marinus (strain ATCC BAA-1437 / JCM 17883 / MC-1)).